Here is a 394-residue protein sequence, read N- to C-terminus: MNTNSKEVLSLGVQVPEAWEELLTMKVEAKSHLQWQESRLKRSNPLAREIFRRHFRQLCYQETPGPREALTRLQELCYQWLRPHVSTKEQILDLLVLEQFLSILPKELQGWVREHCPESGEEAVILLEDLERELDEPQHEMVAHRHRQEVLCKEMVPLAEQTPLTLQSQPKEPQLTCDSAQKCHSIGETDEVTKTEDRELVLRKDCPKIVEPHGKMFNEQTWEVSQQDPSHGEVGEHKDRIERQWGNLLGEGQHKCDECGKSFTQSSGLIRHQRIHTGERPYECNECGKAFSRSSGLFNHRGIHNIQKRYHCKECGKVFSQSAGLIQHQRIHKGEKPYQCSQCSKSYSRRSFLIEHQRSHTGERPHQCIECGKSFNRHCNLIRHQKIHTVAELV.

Residue K26 forms a Glycyl lysine isopeptide (Lys-Gly) (interchain with G-Cter in SUMO2) linkage. The SCAN box domain occupies 52-134 (RRHFRQLCYQ…ILLEDLEREL (83 aa)). Glycyl lysine isopeptide (Lys-Gly) (interchain with G-Cter in SUMO2) cross-links involve residues K215 and K238. 5 consecutive C2H2-type zinc fingers follow at residues 254–276 (HKCD…QRIH), 282–304 (YECN…RGIH), 310–332 (YHCK…QRIH), 338–360 (YQCS…QRSH), and 366–388 (HQCI…QKIH).

Belongs to the krueppel C2H2-type zinc-finger protein family.

It localises to the nucleus. In terms of biological role, may be involved in transcriptional regulation. The chain is Zinc finger and SCAN domain-containing protein 9 (ZSCAN9) from Homo sapiens (Human).